The chain runs to 215 residues: Pyrrolidone-carboxylate peptidase (215 aa).

Residues Glu-78, Cys-141, and His-165 contribute to the active site.

It belongs to the peptidase C15 family. In terms of assembly, homotetramer.

Its subcellular location is the cytoplasm. The catalysed reaction is Release of an N-terminal pyroglutamyl group from a polypeptide, the second amino acid generally not being Pro.. Removes 5-oxoproline from various penultimate amino acid residues except L-proline. This Streptococcus pyogenes serotype M3 (strain SSI-1) protein is Pyrrolidone-carboxylate peptidase.